Here is a 200-residue protein sequence, read N- to C-terminus: MFTYFRGELIEASPDEAVIEVSGVGYLLSISATTYRQLPEPGREVLVLAHLHVKEDLMQLFGFLEEEERQLFRLLLSISGVGPKLALAILSGLQVHEIQEAIVSNMPERLFEITGVGKKTAARIVLELRDRILKLRPSGGTKSVSRLSESSMRDDAVNALVTLGFLRSVAQKAVTESLTSLRNPQVEDLVRDALLTIRTP.

The domain I stretch occupies residues 1 to 64 (MFTYFRGELI…EDLMQLFGFL (64 aa)). Residues 65 to 143 (EEEERQLFRL…KLRPSGGTKS (79 aa)) are domain II. The segment at 144–148 (VSRLS) is flexible linker. Residues 148–200 (SESSMRDDAVNALVTLGFLRSVAQKAVTESLTSLRNPQVEDLVRDALLTIRTP) form a domain III region.

It belongs to the RuvA family. In terms of assembly, homotetramer. Forms an RuvA(8)-RuvB(12)-Holliday junction (HJ) complex. HJ DNA is sandwiched between 2 RuvA tetramers; dsDNA enters through RuvA and exits via RuvB. An RuvB hexamer assembles on each DNA strand where it exits the tetramer. Each RuvB hexamer is contacted by two RuvA subunits (via domain III) on 2 adjacent RuvB subunits; this complex drives branch migration. In the full resolvosome a probable DNA-RuvA(4)-RuvB(12)-RuvC(2) complex forms which resolves the HJ.

It localises to the cytoplasm. Its function is as follows. The RuvA-RuvB-RuvC complex processes Holliday junction (HJ) DNA during genetic recombination and DNA repair, while the RuvA-RuvB complex plays an important role in the rescue of blocked DNA replication forks via replication fork reversal (RFR). RuvA specifically binds to HJ cruciform DNA, conferring on it an open structure. The RuvB hexamer acts as an ATP-dependent pump, pulling dsDNA into and through the RuvAB complex. HJ branch migration allows RuvC to scan DNA until it finds its consensus sequence, where it cleaves and resolves the cruciform DNA. The protein is Holliday junction branch migration complex subunit RuvA of Chlorobium phaeobacteroides (strain BS1).